The following is a 73-amino-acid chain: Putative membrane protein insertion efficiency factor (73 aa).

The protein belongs to the UPF0161 family.

The protein localises to the cell inner membrane. Its function is as follows. Could be involved in insertion of integral membrane proteins into the membrane. This chain is Putative membrane protein insertion efficiency factor, found in Neisseria meningitidis serogroup C / serotype 2a (strain ATCC 700532 / DSM 15464 / FAM18).